Here is a 622-residue protein sequence, read N- to C-terminus: Elongation factor 4 (622 aa).

One can recognise a tr-type G domain in the interval 17 to 198 (ELLRNFCIIA…QIVRQIPAPV (182 aa)). GTP-binding positions include 29–34 (DHGKST) and 145–148 (NKID).

It belongs to the TRAFAC class translation factor GTPase superfamily. Classic translation factor GTPase family. LepA subfamily.

It is found in the cell membrane. The enzyme catalyses GTP + H2O = GDP + phosphate + H(+). In terms of biological role, required for accurate and efficient protein synthesis under certain stress conditions. May act as a fidelity factor of the translation reaction, by catalyzing a one-codon backward translocation of tRNAs on improperly translocated ribosomes. Back-translocation proceeds from a post-translocation (POST) complex to a pre-translocation (PRE) complex, thus giving elongation factor G a second chance to translocate the tRNAs correctly. Binds to ribosomes in a GTP-dependent manner. This is Elongation factor 4 from Kineococcus radiotolerans (strain ATCC BAA-149 / DSM 14245 / SRS30216).